Here is a 147-residue protein sequence, read N- to C-terminus: Large ribosomal subunit protein bL21 (147 aa).

Residues Lys-115–Asn-147 are disordered. Positions Ser-128–Asn-147 are enriched in basic and acidic residues.

The protein belongs to the bacterial ribosomal protein bL21 family. In terms of assembly, part of the 50S ribosomal subunit. Contacts protein L20.

In terms of biological role, this protein binds to 23S rRNA in the presence of protein L20. This Prochlorococcus marinus (strain MIT 9215) protein is Large ribosomal subunit protein bL21.